We begin with the raw amino-acid sequence, 306 residues long: Aspartate carbamoyltransferase catalytic subunit (306 aa).

Carbamoyl phosphate is bound by residues R55 and T56. K84 lines the L-aspartate pocket. Carbamoyl phosphate-binding residues include R105, H133, and Q136. Residues R166 and R227 each contribute to the L-aspartate site. Carbamoyl phosphate is bound by residues L265 and P266.

Belongs to the aspartate/ornithine carbamoyltransferase superfamily. ATCase family. Heterododecamer (2C3:3R2) of six catalytic PyrB chains organized as two trimers (C3), and six regulatory PyrI chains organized as three dimers (R2).

The catalysed reaction is carbamoyl phosphate + L-aspartate = N-carbamoyl-L-aspartate + phosphate + H(+). The protein operates within pyrimidine metabolism; UMP biosynthesis via de novo pathway; (S)-dihydroorotate from bicarbonate: step 2/3. Catalyzes the condensation of carbamoyl phosphate and aspartate to form carbamoyl aspartate and inorganic phosphate, the committed step in the de novo pyrimidine nucleotide biosynthesis pathway. The protein is Aspartate carbamoyltransferase catalytic subunit of Aeromonas hydrophila subsp. hydrophila (strain ATCC 7966 / DSM 30187 / BCRC 13018 / CCUG 14551 / JCM 1027 / KCTC 2358 / NCIMB 9240 / NCTC 8049).